We begin with the raw amino-acid sequence, 1399 residues long: DNA-directed RNA polymerase subunit beta' (1399 aa).

Zn(2+) contacts are provided by Cys-71, Cys-73, Cys-86, and Cys-89. Mg(2+) is bound by residues Asp-462, Asp-464, and Asp-466. 4 residues coordinate Zn(2+): Cys-810, Cys-884, Cys-891, and Cys-894.

The protein belongs to the RNA polymerase beta' chain family. The RNAP catalytic core consists of 2 alpha, 1 beta, 1 beta' and 1 omega subunit. When a sigma factor is associated with the core the holoenzyme is formed, which can initiate transcription. It depends on Mg(2+) as a cofactor. Requires Zn(2+) as cofactor.

The catalysed reaction is RNA(n) + a ribonucleoside 5'-triphosphate = RNA(n+1) + diphosphate. Functionally, DNA-dependent RNA polymerase catalyzes the transcription of DNA into RNA using the four ribonucleoside triphosphates as substrates. This chain is DNA-directed RNA polymerase subunit beta', found in Nitrobacter winogradskyi (strain ATCC 25391 / DSM 10237 / CIP 104748 / NCIMB 11846 / Nb-255).